Consider the following 859-residue polypeptide: MNGLCCCTPCKPRYRRLVDSIYPRAVTDGLLYSNMQKLTFYAISHPEKLERIGEYLVMRMVRDLSRQRPVQVKIAVEAMDQLLQACHSSPSLPQFSENHLRMVQRLLESNNAKMEQLATDSFVTFSNIEESSPSYHRQYDFFIDKFSQMCHANPQAAYGDDFRLARCAGLRGLRGVVWKSVTDDLHPNIWEQQHMDKIVPSILFNLQEPDDSGKGFSSSQIPKFDNTFADSTQSHRVDDEATPKVLSDRCLRELMGKASFGSLRAVIEPVLKHMDLHKRWTPPPSFAIHVFRAIIYSIQSQNSYFVIQELINHLDSMCSADASTRIGIATVLSSIVSIAGTSIGPLLLSIFNSLLKHLRTSVDFERSGKCSDQPAEKMYQEALINAMGDFANALPDYQKVEMMMFTVGNIPNLDERKSKQGDEFLQHVLVKTLLKVATKYRTAYLATVFTDSFLDTLLLLALVRDPQVRLATQQIFHTLLDRHDNAANLVHLGYELDVSDVQLTVEKCSRADQMFMRKHIGEITYMLLRAVALADENDLNKHIDAVLCTMSLLCIESLIELFRLSLALQQLALDSKQNFSDAKRNCIHNMVAKYLNLSAQLIANPSLCQQVQHVVSCRAQRGIPGLNLLLNVKDSPNNDDPLSSSALNSTSQGATTITEEDQTLLFNAEDIAESLKASGKDATRLFVPFNFNMNGRKNDGSGDQWQNDTPNFDSTDGRESPSGYKTVGIDDVSVDMSVDWTPPVSRKQSRRNTIFSIVNPPKLNASTVDDLKAYANATFDPIEEGRKEKELTGSILSEIRNTDFEERVNTNESLNEKSDLSKSIARLLVRNGEMTRVRDIGRPAKPKNLFEIELPSFAY.

Residues 696 to 714 (RKNDGSGDQWQNDTPNFDS) are compositionally biased toward polar residues. The segment at 696–728 (RKNDGSGDQWQNDTPNFDSTDGRESPSGYKTVG) is disordered.

This sequence belongs to the EFR3 family.

The polypeptide is Protein EFR3 homolog (Caenorhabditis elegans).